The sequence spans 229 residues: Large ribosomal subunit protein uL1 (229 aa).

The protein belongs to the universal ribosomal protein uL1 family. As to quaternary structure, part of the 50S ribosomal subunit.

Its function is as follows. Binds directly to 23S rRNA. The L1 stalk is quite mobile in the ribosome, and is involved in E site tRNA release. Functionally, protein L1 is also a translational repressor protein, it controls the translation of the L11 operon by binding to its mRNA. In Streptococcus gordonii (strain Challis / ATCC 35105 / BCRC 15272 / CH1 / DL1 / V288), this protein is Large ribosomal subunit protein uL1.